A 200-amino-acid polypeptide reads, in one-letter code: GTP cyclohydrolase-2 (200 aa).

49-53 (RIHSE) contacts GTP. The Zn(2+) site is built by Cys-54, Cys-65, and Cys-67. GTP is bound by residues Gln-70, 92–94 (EGR), and Thr-114. The active-site Proton acceptor is the Asp-126. Arg-128 acts as the Nucleophile in catalysis. The GTP site is built by Thr-149 and Lys-154.

The protein belongs to the GTP cyclohydrolase II family. Zn(2+) is required as a cofactor.

The enzyme catalyses GTP + 4 H2O = 2,5-diamino-6-hydroxy-4-(5-phosphoribosylamino)-pyrimidine + formate + 2 phosphate + 3 H(+). It participates in cofactor biosynthesis; riboflavin biosynthesis; 5-amino-6-(D-ribitylamino)uracil from GTP: step 1/4. Its function is as follows. Catalyzes the conversion of GTP to 2,5-diamino-6-ribosylamino-4(3H)-pyrimidinone 5'-phosphate (DARP), formate and pyrophosphate. This is GTP cyclohydrolase-2 from Saccharophagus degradans (strain 2-40 / ATCC 43961 / DSM 17024).